Consider the following 211-residue polypeptide: Guanylate kinase (211 aa).

The Guanylate kinase-like domain occupies 5-184; that stretch reads GLLIVFSGPS…AAERVKRIIE (180 aa). 12-19 is an ATP binding site; sequence GPSGVGKG.

This sequence belongs to the guanylate kinase family.

The protein resides in the cytoplasm. The catalysed reaction is GMP + ATP = GDP + ADP. Essential for recycling GMP and indirectly, cGMP. This Streptococcus pyogenes serotype M1 protein is Guanylate kinase.